Here is a 638-residue protein sequence, read N- to C-terminus: Phosphomethylpyrimidine synthase (638 aa).

Substrate is bound by residues N243, M272, Y301, H337, S357–G359, D398–R401, and E437. H441 contacts Zn(2+). Y464 provides a ligand contact to substrate. H505 is a binding site for Zn(2+). [4Fe-4S] cluster-binding residues include C585, C588, and C593.

This sequence belongs to the ThiC family. Homodimer. [4Fe-4S] cluster is required as a cofactor.

It carries out the reaction 5-amino-1-(5-phospho-beta-D-ribosyl)imidazole + S-adenosyl-L-methionine = 4-amino-2-methyl-5-(phosphooxymethyl)pyrimidine + CO + 5'-deoxyadenosine + formate + L-methionine + 3 H(+). It participates in cofactor biosynthesis; thiamine diphosphate biosynthesis. Functionally, catalyzes the synthesis of the hydroxymethylpyrimidine phosphate (HMP-P) moiety of thiamine from aminoimidazole ribotide (AIR) in a radical S-adenosyl-L-methionine (SAM)-dependent reaction. In Dechloromonas aromatica (strain RCB), this protein is Phosphomethylpyrimidine synthase.